Reading from the N-terminus, the 88-residue chain is Small ribosomal subunit protein bS20 (88 aa).

Residues 1–17 (MANIKSNEKRLRQDIKR) show a composition bias toward basic and acidic residues. Residues 1–25 (MANIKSNEKRLRQDIKRNLNNKGQK) form a disordered region.

Belongs to the bacterial ribosomal protein bS20 family.

Binds directly to 16S ribosomal RNA. The protein is Small ribosomal subunit protein bS20 of Mycoplasma genitalium (strain ATCC 33530 / DSM 19775 / NCTC 10195 / G37) (Mycoplasmoides genitalium).